A 294-amino-acid chain; its full sequence is MLDKLPTEQRNPKTMDIDTKSIKEILEMMNREDFTVPQTVQKEISFIEEAVHRTIHSFKSNGRLIYIGAGTSGRLGVLDASECPPTFGVSSEMVKGLISGGLEAITKAKEGAEDSEAMAKQDLLDIKLTEHDTVIGIAASGRTPYVKGALSYANEIGASTVAISNNKNSEIGKIAEIAIEAETGPEVITGSTRLKAGTAQKLILNMISTASMIGVGKVYENLMVDLKPTNKKLVDRSKRIIMEATQVDYTTAENYLQKANNSVKTAIVMILLNCNVDEAIQHLDRAEGFIRKTK.

Positions T54–K217 constitute an SIS domain. The active-site Proton donor is the E82. E113 is an active-site residue.

This sequence belongs to the GCKR-like family. MurNAc-6-P etherase subfamily. In terms of assembly, homodimer.

The enzyme catalyses N-acetyl-D-muramate 6-phosphate + H2O = N-acetyl-D-glucosamine 6-phosphate + (R)-lactate. It participates in amino-sugar metabolism; N-acetylmuramate degradation. Specifically catalyzes the cleavage of the D-lactyl ether substituent of MurNAc 6-phosphate, producing GlcNAc 6-phosphate and D-lactate. The protein is N-acetylmuramic acid 6-phosphate etherase of Oceanobacillus iheyensis (strain DSM 14371 / CIP 107618 / JCM 11309 / KCTC 3954 / HTE831).